A 198-amino-acid chain; its full sequence is Na(+)-translocating NADH-quinone reductase subunit E (198 aa).

A run of 6 helical transmembrane segments spans residues 11–31 (AVFV…FLAV), 35–55 (VSTA…SVPV), 77–97 (FLNF…LEMI), 110–130 (GIFL…SFMV), 140–160 (VVYG…MAGI), and 176–196 (LGIT…FSGV).

This sequence belongs to the NqrDE/RnfAE family. In terms of assembly, composed of six subunits; NqrA, NqrB, NqrC, NqrD, NqrE and NqrF.

It localises to the cell inner membrane. The catalysed reaction is a ubiquinone + n Na(+)(in) + NADH + H(+) = a ubiquinol + n Na(+)(out) + NAD(+). NQR complex catalyzes the reduction of ubiquinone-1 to ubiquinol by two successive reactions, coupled with the transport of Na(+) ions from the cytoplasm to the periplasm. NqrA to NqrE are probably involved in the second step, the conversion of ubisemiquinone to ubiquinol. The polypeptide is Na(+)-translocating NADH-quinone reductase subunit E (Serratia proteamaculans (strain 568)).